The chain runs to 1377 residues: DNA-directed RNA polymerase subunit beta (1377 aa).

It belongs to the RNA polymerase beta chain family. As to quaternary structure, the RNAP catalytic core consists of 2 alpha, 1 beta, 1 beta' and 1 omega subunit. When a sigma factor is associated with the core the holoenzyme is formed, which can initiate transcription.

The catalysed reaction is RNA(n) + a ribonucleoside 5'-triphosphate = RNA(n+1) + diphosphate. In terms of biological role, DNA-dependent RNA polymerase catalyzes the transcription of DNA into RNA using the four ribonucleoside triphosphates as substrates. This Azoarcus sp. (strain BH72) protein is DNA-directed RNA polymerase subunit beta.